The primary structure comprises 354 residues: Hyaluronan and proteoglycan link protein 1 (354 aa).

A propeptide spanning residues 1 to 9 (MKSLLLLVL) is cleaved from the precursor. Asn-21 and Asn-56 each carry an N-linked (GlcNAc...) asparagine glycan. Residues 38–152 (PRLLVEAEQA…EGLEDDTAVV (115 aa)) enclose the Ig-like V-type domain. Intrachain disulfides connect Cys-61/Cys-139, Cys-181/Cys-252, Cys-205/Cys-226, Cys-279/Cys-349, and Cys-304/Cys-325. Link domains follow at residues 159–254 (VVFP…FCFT) and 259–351 (GRFY…YCFR).

It belongs to the HAPLN family.

The protein resides in the secreted. It localises to the extracellular space. The protein localises to the extracellular matrix. In terms of biological role, stabilizes the aggregates of proteoglycan monomers with hyaluronic acid in the extracellular cartilage matrix. The protein is Hyaluronan and proteoglycan link protein 1 (HAPLN1) of Sus scrofa (Pig).